The sequence spans 104 residues: MTGKAKPKKHTAKELQAKADAALTNRGGGKAGLADRTGKEKGGHAKYECPHCKITVPDLKTMQIHHESKHPKLTYEEPRNLHEALAAPAESSKPKPGIRGSLKK.

The span at 1 to 11 shows a compositional bias: basic residues; the sequence is MTGKAKPKKHT. 2 disordered regions span residues 1-46 and 64-104; these read MTGK…GHAK and IHHE…SLKK. 2 stretches are compositionally biased toward basic and acidic residues: residues 36 to 46 and 73 to 82; these read RTGKEKGGHAK and LTYEEPRNLH.

Its subcellular location is the nucleus. It is found in the cytoplasm. The protein localises to the stress granule. Its function is as follows. Required for acclimation to reactive oxygen species (ROS) responses downstream of beta-cyclocitral, including singlet oxygen 1O(2) detoxification reactions, especially upon light-mediated photooxidative stress, and leading to programmed cell death. Prevents leaf senescence. The sequence is that of Protein METHYLENE BLUE SENSITIVITY 2 from Arabidopsis thaliana (Mouse-ear cress).